A 443-amino-acid polypeptide reads, in one-letter code: Glucose-6-phosphate isomerase (443 aa).

E285 acts as the Proton donor in catalysis. Catalysis depends on residues H306 and K420.

This sequence belongs to the GPI family.

The protein resides in the cytoplasm. The enzyme catalyses alpha-D-glucose 6-phosphate = beta-D-fructose 6-phosphate. It functions in the pathway carbohydrate biosynthesis; gluconeogenesis. The protein operates within carbohydrate degradation; glycolysis; D-glyceraldehyde 3-phosphate and glycerone phosphate from D-glucose: step 2/4. Catalyzes the reversible isomerization of glucose-6-phosphate to fructose-6-phosphate. The chain is Glucose-6-phosphate isomerase from Staphylococcus epidermidis (strain ATCC 12228 / FDA PCI 1200).